The primary structure comprises 405 residues: Argininosuccinate synthase (405 aa).

Residues 10–18 and A37 contribute to the ATP site; that span reads AYSGGLDTS. L-citrulline is bound by residues Y88 and S93. G118 is a binding site for ATP. L-aspartate-binding residues include T120, N124, and D125. N124 is a binding site for L-citrulline. R128, S179, S188, E264, and Y276 together coordinate L-citrulline.

The protein belongs to the argininosuccinate synthase family. Type 1 subfamily. In terms of assembly, homotetramer.

The protein resides in the cytoplasm. It catalyses the reaction L-citrulline + L-aspartate + ATP = 2-(N(omega)-L-arginino)succinate + AMP + diphosphate + H(+). It participates in amino-acid biosynthesis; L-arginine biosynthesis; L-arginine from L-ornithine and carbamoyl phosphate: step 2/3. The chain is Argininosuccinate synthase from Pseudomonas fluorescens (strain SBW25).